The chain runs to 851 residues: Glycogen phosphorylase, liver form (851 aa).

Ala-2 is subject to N-acetylalanine. Ser-15 carries the post-translational modification Phosphoserine; by PHK; in form phosphorylase a. AMP is bound by residues 43–45 (DRN), Tyr-76, and Arg-310. At Lys-364 the chain carries N6-succinyllysine. N6-acetyllysine is present on Lys-470. Residues Ser-524, Ser-561, and Ser-639 each carry the phosphoserine modification. At Lys-681 the chain carries N6-(pyridoxal phosphate)lysine. N6-acetyllysine is present on Lys-796.

This sequence belongs to the glycogen phosphorylase family. As to quaternary structure, homodimer; enzymatically active. Interacts with PPP1R3B; recruits the phosphatase PP1 which dephosphorylates and inactivates PYGL/glycogen phosphorylase. The cofactor is pyridoxal 5'-phosphate. In terms of processing, acetylation, which is up-regulated by glucose and insulin and down-regulated by glucagon, inhibits the glycogen phosphorylase activity by promoting PPP1R3B-mediated recruitment of phosphatase PP1 and Ser-15 dephosphorylation. Post-translationally, phosphorylation at Ser-15 converts inactive phosphorylase b into active phosphorylase a. Dephosphorylation of Ser-15 by phosphatase PP1 inactivates the enzyme.

The protein localises to the cytoplasm. It is found in the cytosol. It carries out the reaction [(1-&gt;4)-alpha-D-glucosyl](n) + phosphate = [(1-&gt;4)-alpha-D-glucosyl](n-1) + alpha-D-glucose 1-phosphate. With respect to regulation, allosterically regulated through the non-covalent binding of metabolites, being activated by AMP and inhibited by ATP, ADP, and glucose-6-phosphate. The activity is also controlled by post-translational modifications including phosphorylation and acetylation. Functionally, allosteric enzyme that catalyzes the rate-limiting step in glycogen catabolism, the phosphorolytic cleavage of glycogen to produce glucose-1-phosphate, and plays a central role in maintaining cellular and organismal glucose homeostasis. The sequence is that of Glycogen phosphorylase, liver form from Ovis aries (Sheep).